Here is a 146-residue protein sequence, read N- to C-terminus: Large ribosomal subunit protein uL15 (146 aa).

The span at 1-10 (MRLNQLSPSA) shows a compositional bias: polar residues. The segment at 1-54 (MRLNQLSPSAGSRPDAKRAGRGAGSGLGKTAGRGHKGQHSRSGGFHKVGFEGGQ) is disordered. A compositionally biased stretch (gly residues) spans 21–31 (RGAGSGLGKTA).

It belongs to the universal ribosomal protein uL15 family. As to quaternary structure, part of the 50S ribosomal subunit.

Functionally, binds to the 23S rRNA. The sequence is that of Large ribosomal subunit protein uL15 from Halorhodospira halophila (strain DSM 244 / SL1) (Ectothiorhodospira halophila (strain DSM 244 / SL1)).